The following is a 301-amino-acid chain: Acetylglutamate kinase (301 aa).

Substrate contacts are provided by residues 68–69 (GG), Arg-90, and Asn-197.

It belongs to the acetylglutamate kinase family. ArgB subfamily.

The protein resides in the cytoplasm. The enzyme catalyses N-acetyl-L-glutamate + ATP = N-acetyl-L-glutamyl 5-phosphate + ADP. It functions in the pathway amino-acid biosynthesis; L-arginine biosynthesis; N(2)-acetyl-L-ornithine from L-glutamate: step 2/4. Functionally, catalyzes the ATP-dependent phosphorylation of N-acetyl-L-glutamate. This is Acetylglutamate kinase from Nitrosococcus oceani (strain ATCC 19707 / BCRC 17464 / JCM 30415 / NCIMB 11848 / C-107).